The sequence spans 451 residues: MHKLLFSLLSVVSLSFLLFFHGAEARQREAPFPNACHFSQINSLAPAQATKFEAGQMEVWDHMSPELRCAGVTVARITLQPNSIFLPAFFSPPALAYVVQGEGVMGTIASGCPETFAEVEGSSGRGGGGDPGRRFEDMHQKLENFRRGDVFASLAGVSQWWYNRGDSDAVIVIVLDVTNRENQLDQVPRMFQLAGSRTQEEEQPLTWPSGNNAFSGFDPNIIAEAFKINIETAKQLQNQKDNRGNIIRANGPLHFVIPPPREWQQDGIANGIEETYCTAKIHENIDDPERSDHFSTRAGRISTLNSLNLPVLRLVRLNALRGYLYSGGMVLPQWTANAHTVLYVTGGQAKIQVVDDNGQSVFNEQVGQGQIIVIPQGFAVSKTAGETGFEWISFKTNDNAYINTLSGQTSYLRAVPVDVIKASYGVNEEEAKRIKFSQQETMLSMTPSSSS.

The N-terminal stretch at 1 to 25 is a signal peptide; it reads MHKLLFSLLSVVSLSFLLFFHGAEA. 2 disulfides stabilise this stretch: Cys36–Cys69 and Cys112–Cys277. Ser39 carries the post-translational modification Phosphoserine. Cupin type-1 domains follow at residues 42 to 234 and 283 to 432; these read NSLA…ETAK and ENID…EEAK. Thr115 is subject to Phosphothreonine. Residue Ser302 is modified to Phosphoserine. Thr396 is subject to Phosphothreonine. The residue at position 437 (Ser437) is a Phosphoserine.

Belongs to the 11S seed storage protein (globulins) family. As to quaternary structure, hexamer; each subunit is composed of an acidic and a basic chain derived from a single precursor and linked by a disulfide bond. Post-translationally, ubiquitinated. Proteolytically processed during seed maturation at a conserved Asn-Gly peptide bond by an asparaginyl endopeptidase to produce two mature polypeptides referred to as alpha and beta subunits that are joined together by a disulfide bond. In terms of processing, phosphorylated in seeds on some Tyr residues in response to abscisic acid (ABA). As to expression, accumulates in seeds 8 days after anthesis.

The protein resides in the protein storage vacuole. Functionally, seed storage protein. The polypeptide is 12S seed storage protein CRD (CRD) (Arabidopsis thaliana (Mouse-ear cress)).